Reading from the N-terminus, the 433-residue chain is Homoserine O-acetyltransferase (433 aa).

The 345-residue stretch at 41–385 folds into the AB hydrolase-1 domain; sequence NVVLVCHALT…HGHDAFLVEP (345 aa). The tract at residues 55–74 is disordered; sequence VARSPAPERNEGTRGAGQAG. Catalysis depends on S166, which acts as the Nucleophile. Substrate is bound at residue R237. Active-site residues include D345 and H378. D379 serves as a coordination point for substrate. A disordered region spans residues 403–433; the sequence is RAVSDDGGGGGNDSARPERDHAPVHASLFKG.

This sequence belongs to the AB hydrolase superfamily. MetX family. In terms of assembly, homodimer.

Its subcellular location is the cytoplasm. It catalyses the reaction L-homoserine + acetyl-CoA = O-acetyl-L-homoserine + CoA. The protein operates within amino-acid biosynthesis; L-methionine biosynthesis via de novo pathway; O-acetyl-L-homoserine from L-homoserine: step 1/1. In terms of biological role, transfers an acetyl group from acetyl-CoA to L-homoserine, forming acetyl-L-homoserine. The protein is Homoserine O-acetyltransferase of Halorubrum lacusprofundi (strain ATCC 49239 / DSM 5036 / JCM 8891 / ACAM 34).